Here is a 1070-residue protein sequence, read N- to C-terminus: DNA-directed RNA polymerase subunit beta (1070 aa).

It belongs to the RNA polymerase beta chain family. In plastids the minimal PEP RNA polymerase catalytic core is composed of four subunits: alpha, beta, beta', and beta''. When a (nuclear-encoded) sigma factor is associated with the core the holoenzyme is formed, which can initiate transcription.

Its subcellular location is the plastid. It localises to the chloroplast. The catalysed reaction is RNA(n) + a ribonucleoside 5'-triphosphate = RNA(n+1) + diphosphate. Its function is as follows. DNA-dependent RNA polymerase catalyzes the transcription of DNA into RNA using the four ribonucleoside triphosphates as substrates. The chain is DNA-directed RNA polymerase subunit beta from Gossypium barbadense (Sea Island cotton).